Consider the following 304-residue polypeptide: DCN1-like protein 3 (304 aa).

Disordered regions lie at residues 1–87 (MGQC…EESS) and 284–304 (EGEGRGALSSGPEGLCPEEQT). Residue Gly-2 is the site of N-myristoyl glycine attachment. A DCUN1 domain is found at 86 to 278 (SSLQRLEELF…LFDTFVEWEM (193 aa)).

Part of a complex containing DCUN1D3, CUL3 and RBX1. Interacts (via the DCUN1 domain) with the unneddylated cullins: interacts with CUL1, CUL2, CUL3, CUL4A, CUL4B and CUL5; these interactions promote the cullin neddylation and the identity of the cullin dictates the affinity of the interaction. Interacts preferentially with CUL3; this interaction triggers the relocalization of CUL3 to the cell membrane where CUL3 is neddylated. Interacts (via DCUN1 domain) with RBX1. May also interact with regulators or subunits of cullin-RING ligases such as RNF7, ELOB and DDB1; these interactions are bridged by cullins. Interacts (via DCUN1 domain) with CAND1; this interaction is bridged by cullins and strongly inhibits cullin neddylation. These CAND-cullin-DCNL complexes can only be neddylated in the presence of a substrate adapter. Interacts (via DCUN1 domain) with the N-terminally acetylated form of UBE2M and UBE2F.

Its subcellular location is the cell membrane. It is found in the cytoplasm. It localises to the nucleus. The protein resides in the perinuclear region. Contributes to the neddylation of all cullins by transferring NEDD8 from N-terminally acetylated NEDD8-conjugating E2s enzyme to different cullin C-terminal domain-RBX complexes and may play a role in the cell cycle progression by regulating the SCF ubiquitin E3 ligase complex, after UV damage. At the cell membrane, can promote and as well inhibit cullins neddylation. The chain is DCN1-like protein 3 from Bos taurus (Bovine).